Consider the following 190-residue polypeptide: Xanthine phosphoribosyltransferase (190 aa).

Xanthine is bound by residues Leu20 and Asn27. 128–132 (ANGKA) is a binding site for 5-phospho-alpha-D-ribose 1-diphosphate. Lys156 serves as a coordination point for xanthine.

The protein belongs to the purine/pyrimidine phosphoribosyltransferase family. Xpt subfamily. Homodimer.

It localises to the cytoplasm. It carries out the reaction XMP + diphosphate = xanthine + 5-phospho-alpha-D-ribose 1-diphosphate. It functions in the pathway purine metabolism; XMP biosynthesis via salvage pathway; XMP from xanthine: step 1/1. Converts the preformed base xanthine, a product of nucleic acid breakdown, to xanthosine 5'-monophosphate (XMP), so it can be reused for RNA or DNA synthesis. This Pseudomonas fluorescens (strain ATCC BAA-477 / NRRL B-23932 / Pf-5) protein is Xanthine phosphoribosyltransferase.